Reading from the N-terminus, the 236-residue chain is Uridylate kinase (236 aa).

10–13 (KLSG) contributes to the ATP binding site. Glycine 52 provides a ligand contact to UMP. 2 residues coordinate ATP: glycine 53 and arginine 57. Residues aspartate 72 and 133-140 (TGNPFFTT) each bind UMP. Residues threonine 160, tyrosine 166, and aspartate 169 each coordinate ATP.

This sequence belongs to the UMP kinase family. As to quaternary structure, homohexamer.

The protein localises to the cytoplasm. It carries out the reaction UMP + ATP = UDP + ADP. The protein operates within pyrimidine metabolism; CTP biosynthesis via de novo pathway; UDP from UMP (UMPK route): step 1/1. Inhibited by UTP. Its function is as follows. Catalyzes the reversible phosphorylation of UMP to UDP. This is Uridylate kinase from Parabacteroides distasonis (strain ATCC 8503 / DSM 20701 / CIP 104284 / JCM 5825 / NCTC 11152).